We begin with the raw amino-acid sequence, 386 residues long: Bifunctional enzyme IspD/IspF (386 aa).

The interval 1–229 (MIRGERVIGI…RARALLEAPV (229 aa)) is 2-C-methyl-D-erythritol 4-phosphate cytidylyltransferase. A 2-C-methyl-D-erythritol 2,4-cyclodiphosphate synthase region spans residues 230-386 (ATGVGYDTHR…AIALLVRAAG (157 aa)). Residues Asp-236 and His-238 each contribute to the a divalent metal cation site. 4-CDP-2-C-methyl-D-erythritol 2-phosphate-binding positions include 236-238 (DTH) and 261-262 (HS). His-269 contributes to the a divalent metal cation binding site. 4-CDP-2-C-methyl-D-erythritol 2-phosphate is bound by residues 283–285 (DLG), 288–292 (FPDTD), 359–362 (TTGE), Phe-366, and Arg-369.

It in the N-terminal section; belongs to the IspD/TarI cytidylyltransferase family. IspD subfamily. In the C-terminal section; belongs to the IspF family. A divalent metal cation serves as cofactor.

The catalysed reaction is 2-C-methyl-D-erythritol 4-phosphate + CTP + H(+) = 4-CDP-2-C-methyl-D-erythritol + diphosphate. It catalyses the reaction 4-CDP-2-C-methyl-D-erythritol 2-phosphate = 2-C-methyl-D-erythritol 2,4-cyclic diphosphate + CMP. The protein operates within isoprenoid biosynthesis; isopentenyl diphosphate biosynthesis via DXP pathway; isopentenyl diphosphate from 1-deoxy-D-xylulose 5-phosphate: step 2/6. Its pathway is isoprenoid biosynthesis; isopentenyl diphosphate biosynthesis via DXP pathway; isopentenyl diphosphate from 1-deoxy-D-xylulose 5-phosphate: step 4/6. In terms of biological role, bifunctional enzyme that catalyzes the formation of 4-diphosphocytidyl-2-C-methyl-D-erythritol from CTP and 2-C-methyl-D-erythritol 4-phosphate (MEP) (IspD), and catalyzes the conversion of 4-diphosphocytidyl-2-C-methyl-D-erythritol 2-phosphate (CDP-ME2P) to 2-C-methyl-D-erythritol 2,4-cyclodiphosphate (ME-CPP) with a corresponding release of cytidine 5-monophosphate (CMP) (IspF). The polypeptide is Bifunctional enzyme IspD/IspF (Anaeromyxobacter dehalogenans (strain 2CP-C)).